Here is an 807-residue protein sequence, read N- to C-terminus: Glycerol-3-phosphate acyltransferase (807 aa).

The HXXXXD motif motif lies at 305-310 (CHRSHM).

This sequence belongs to the GPAT/DAPAT family.

The protein resides in the cell inner membrane. The catalysed reaction is sn-glycerol 3-phosphate + an acyl-CoA = a 1-acyl-sn-glycero-3-phosphate + CoA. Its pathway is phospholipid metabolism; CDP-diacylglycerol biosynthesis; CDP-diacylglycerol from sn-glycerol 3-phosphate: step 1/3. The protein is Glycerol-3-phosphate acyltransferase of Klebsiella pneumoniae subsp. pneumoniae (strain ATCC 700721 / MGH 78578).